Consider the following 219-residue polypeptide: Ribose-5-phosphate isomerase A (219 aa).

Substrate contacts are provided by residues 28–31, 81–84, and 94–97; these read SGST, DGAD, and KGGG. E103 (proton acceptor) is an active-site residue. Substrate is bound at residue K121.

Belongs to the ribose 5-phosphate isomerase family. As to quaternary structure, homodimer.

The enzyme catalyses aldehydo-D-ribose 5-phosphate = D-ribulose 5-phosphate. The protein operates within carbohydrate degradation; pentose phosphate pathway; D-ribose 5-phosphate from D-ribulose 5-phosphate (non-oxidative stage): step 1/1. Catalyzes the reversible conversion of ribose-5-phosphate to ribulose 5-phosphate. This chain is Ribose-5-phosphate isomerase A, found in Actinobacillus pleuropneumoniae serotype 3 (strain JL03).